Consider the following 153-residue polypeptide: Endoribonuclease YbeY (153 aa).

His114, His118, and His124 together coordinate Zn(2+).

The protein belongs to the endoribonuclease YbeY family. It depends on Zn(2+) as a cofactor.

It is found in the cytoplasm. Single strand-specific metallo-endoribonuclease involved in late-stage 70S ribosome quality control and in maturation of the 3' terminus of the 16S rRNA. In Finegoldia magna (strain ATCC 29328 / DSM 20472 / WAL 2508) (Peptostreptococcus magnus), this protein is Endoribonuclease YbeY.